The primary structure comprises 278 residues: Transcription initiation factor TFIID subunit 9 (278 aa).

The interval 193-278 (TTTKTVGSSG…EEEEFEFVTN (86 aa)) is disordered. Residues 200 to 210 (SSGGSGGGGGQ) are compositionally biased toward gly residues. Low complexity predominate over residues 231–240 (AAAVGSIAGA). The segment covering 241 to 259 (SGSGAGSASGGGGGGGSSG) has biased composition (gly residues). Over residues 269–278 (EEEEFEFVTN) the composition is skewed to acidic residues.

Belongs to the TAF9 family. As to quaternary structure, belongs to the TFIID complex which is composed of TATA binding protein (Tbp) and a number of TBP-associated factors (TAFs). Taf9 and Taf6 exist as a heterotetramer. Interacts with e(y)2.

It is found in the nucleus. Its function is as follows. TFIID is a multimeric protein complex that plays a central role in mediating promoter responses to various activators and repressors. This Drosophila melanogaster (Fruit fly) protein is Transcription initiation factor TFIID subunit 9.